A 491-amino-acid polypeptide reads, in one-letter code: Katanin p60 ATPase-containing subunit A1 (491 aa).

The segment at 1–29 is interaction with KATNB1; that stretch reads MSLQMIVENVKLAREYALLGNYDSAMVYY. Positions 1–75 are interaction with dynein and NDEL1; the sequence is MSLQMIVENV…VKDIMKTLES (75 aa). Positions 1–185 are interaction with microtubules; sufficient for microtubule severing activity; sequence MSLQMIVENV…EPEANKFDGT (185 aa). Serine 42 is subject to Phosphoserine; by DYRK2. A disordered region spans residues 101–182; it reads PVPVERRPLP…AVTEPEANKF (82 aa). The segment covering 145-169 has biased composition (basic and acidic residues); the sequence is HNDRGKAVRSREKKEQSKGREEKNK. 249–256 contacts ATP; the sequence is GPPGTGKT.

Belongs to the AAA ATPase family. Katanin p60 subunit A1 subfamily. In terms of assembly, can homooligomerize into hexameric rings, which may be promoted by interaction with microtubules. Interacts with KATNB1, which may serve as a targeting subunit. Interacts with ASPM; the katanin complex formation KATNA1:KATNB1 is required for the association of ASPM. Interacts with dynein and NDEL1. Associates with the E3 ligase complex containing DYRK2, EDD/UBR5, DDB1 and DCAF1 proteins (EDVP complex). Interacts with KLHL42 (via the kelch domains). Interacts with CUL3; the interaction is enhanced by KLHL42. Interacts with KATNB1 and KATNBL1. Interacts with CAMSAP2 and CAMSAP3; leading to regulate the length of CAMSAP-decorated microtubule stretches. In terms of processing, phosphorylation by DYRK2 triggers ubiquitination and subsequent degradation. Ubiquitinated by the BCR(KLHL42) E3 ubiquitin ligase complex, leading to its proteasomal degradation. Ubiquitinated by the EDVP E3 ligase complex and subsequently targeted for proteasomal degradation.

It localises to the cytoplasm. It is found in the midbody. Its subcellular location is the cytoskeleton. The protein resides in the microtubule organizing center. The protein localises to the centrosome. It localises to the spindle pole. It is found in the spindle. It catalyses the reaction n ATP + n H2O + a microtubule = n ADP + n phosphate + (n+1) alpha/beta tubulin heterodimers.. ATPase activity is stimulated by microtubules, which promote homooligomerization. ATP-dependent microtubule severing is stimulated by interaction with KATNB1. Catalytic subunit of a complex which severs microtubules in an ATP-dependent manner. Microtubule severing may promote rapid reorganization of cellular microtubule arrays and the release of microtubules from the centrosome following nucleation. Microtubule release from the mitotic spindle poles may allow depolymerization of the microtubule end proximal to the spindle pole, leading to poleward microtubule flux and poleward motion of chromosome. The function in regulating microtubule dynamics at spindle poles seems to depend on the association of the katanin KATNA1:KATNB1 complex with ASPM which recruits it to microtubules. Reversely KATNA1:KATNB1 can enhance ASPM blocking activity on microtubule minus-end growth. Microtubule release within the cell body of neurons may be required for their transport into neuronal processes by microtubule-dependent motor proteins. This transport is required for axonal growth. The chain is Katanin p60 ATPase-containing subunit A1 (Katna1) from Mus musculus (Mouse).